A 298-amino-acid polypeptide reads, in one-letter code: Acetyl-coenzyme A carboxylase carboxyl transferase subunit beta (298 aa).

The disordered stretch occupies residues 1–21 (MNQEVKSGKVLSPSTPWTQRP). A C4-type zinc finger spans residues 20–67 (RPVPGIEVADEQQTLKATFTEPTIECPECHALVTRTAISFNAYVCPQC). The CoA carboxyltransferase N-terminal domain occupies 41–298 (PTIECPECHA…RLVSKLMNLP (258 aa)). The Zn(2+) site is built by cysteine 45, cysteine 48, cysteine 64, and cysteine 67.

Belongs to the AccD/PCCB family. In terms of assembly, acetyl-CoA carboxylase is a heterohexamer composed of biotin carboxyl carrier protein (AccB), biotin carboxylase (AccC) and two subunits each of ACCase subunit alpha (AccA) and ACCase subunit beta (AccD). It depends on Zn(2+) as a cofactor.

The protein resides in the cytoplasm. The enzyme catalyses N(6)-carboxybiotinyl-L-lysyl-[protein] + acetyl-CoA = N(6)-biotinyl-L-lysyl-[protein] + malonyl-CoA. The protein operates within lipid metabolism; malonyl-CoA biosynthesis; malonyl-CoA from acetyl-CoA: step 1/1. In terms of biological role, component of the acetyl coenzyme A carboxylase (ACC) complex. Biotin carboxylase (BC) catalyzes the carboxylation of biotin on its carrier protein (BCCP) and then the CO(2) group is transferred by the transcarboxylase to acetyl-CoA to form malonyl-CoA. In Acinetobacter baumannii (strain SDF), this protein is Acetyl-coenzyme A carboxylase carboxyl transferase subunit beta.